The primary structure comprises 220 residues: Deoxyribose-phosphate aldolase (220 aa).

Asp-89 functions as the Proton donor/acceptor in the catalytic mechanism. Residue Lys-151 is the Schiff-base intermediate with acetaldehyde of the active site. Lys-180 acts as the Proton donor/acceptor in catalysis.

Belongs to the DeoC/FbaB aldolase family. DeoC type 1 subfamily.

It is found in the cytoplasm. It catalyses the reaction 2-deoxy-D-ribose 5-phosphate = D-glyceraldehyde 3-phosphate + acetaldehyde. The protein operates within carbohydrate degradation; 2-deoxy-D-ribose 1-phosphate degradation; D-glyceraldehyde 3-phosphate and acetaldehyde from 2-deoxy-alpha-D-ribose 1-phosphate: step 2/2. Catalyzes a reversible aldol reaction between acetaldehyde and D-glyceraldehyde 3-phosphate to generate 2-deoxy-D-ribose 5-phosphate. This is Deoxyribose-phosphate aldolase from Streptococcus suis (strain 05ZYH33).